The sequence spans 414 residues: Peptide chain release factor subunit 1 (414 aa).

This sequence belongs to the eukaryotic release factor 1 family. Heterodimer of two subunits, one of which binds GTP.

The protein resides in the cytoplasm. Directs the termination of nascent peptide synthesis (translation) in response to the termination codons UAA, UAG and UGA. This is Peptide chain release factor subunit 1 (prf1) from Pyrococcus abyssi (strain GE5 / Orsay).